Here is a 448-residue protein sequence, read N- to C-terminus: MKSCEVNFDGLVGPTHNYGGLSYGNVASQSNSQQSANPREAALQGLAKMKALMDLGFTQGVLAPQERPDVSGLRRLGFTGSDEQVIEKAARQDMPLLVASCSASSMWVANAATVSPSADTADGRVHFTAANLNCKYHRSIEHPTTTRVLGAMFADAKHFAHHPALPAVAQFGDEGAANHTRFCRDYGEAGVEFFVFGRSAFDTRYPAPQKYPARQTLEASRAVARLHGLSEAGVVYSQQNPAVIDQGVFHNDVIAVGNGEVLFYHQDAFLNTDPMLNELRDKLGRVGGQLRAICVPRAEVSVQDAVRSYLFNSQLLSRPDGSMLLIVPQECQANASVWAYLQRLIADDSPVAEVKVFDLKQSMQNGGGPACLRLRVALNDTELAAVNPGVIMTAPLYETLTQWVDRHYRDRMSESDLADPRLLSECRTALDELTQILKLGAVYPFQLN.

Residues G19–S28, N110, and H137–R138 contribute to the substrate site. E174 is a catalytic residue. Position 214 (R214) interacts with substrate. H250 is a catalytic residue. Substrate is bound by residues D252 and N365. The active-site Nucleophile is C371.

Belongs to the succinylarginine dihydrolase family. In terms of assembly, homodimer.

It carries out the reaction N(2)-succinyl-L-arginine + 2 H2O + 2 H(+) = N(2)-succinyl-L-ornithine + 2 NH4(+) + CO2. The protein operates within amino-acid degradation; L-arginine degradation via AST pathway; L-glutamate and succinate from L-arginine: step 2/5. Catalyzes the hydrolysis of N(2)-succinylarginine into N(2)-succinylornithine, ammonia and CO(2). The chain is N-succinylarginine dihydrolase from Pseudomonas syringae pv. syringae (strain B728a).